The following is a 269-amino-acid chain: Tryptophan synthase alpha chain (269 aa).

Active-site proton acceptor residues include E49 and D60.

The protein belongs to the TrpA family. Tetramer of two alpha and two beta chains.

It carries out the reaction (1S,2R)-1-C-(indol-3-yl)glycerol 3-phosphate + L-serine = D-glyceraldehyde 3-phosphate + L-tryptophan + H2O. Its pathway is amino-acid biosynthesis; L-tryptophan biosynthesis; L-tryptophan from chorismate: step 5/5. In terms of biological role, the alpha subunit is responsible for the aldol cleavage of indoleglycerol phosphate to indole and glyceraldehyde 3-phosphate. The sequence is that of Tryptophan synthase alpha chain from Delftia acidovorans (strain DSM 14801 / SPH-1).